A 467-amino-acid chain; its full sequence is Proton extrusion protein PxcA (467 aa).

The span at 146–161 (SQVRTTSSQPPENPSL) shows a compositional bias: polar residues. Disordered regions lie at residues 146-167 (SQVRTTSSQPPENPSLTDALRT) and 186-205 (PQLIKQRTEQSKKSRGKADT). The span at 191 to 203 (QRTEQSKKSRGKA) shows a compositional bias: basic and acidic residues. 4 helical membrane-spanning segments follow: residues 249–269 (FILLIIIVPLLTHQLSKALIV), 352–372 (IFSVGAFIWLLLVSKPSIMVL), 391–411 (IIILFTDVFVGFHSPHGWEVI), and 427–447 (FIFLFIATFPVILDTIFKYWI).

Belongs to the CemA family.

It is found in the cell inner membrane. Functionally, required for H(+) efflux immediately after light irradiation to form a rapid H(+) concentration gradient across the thylakoid membranes. Together with PxcL, contributes to transient H(+) uptake following dark to light transition. The polypeptide is Proton extrusion protein PxcA (Nostoc sp. (strain PCC 7120 / SAG 25.82 / UTEX 2576)).